Here is a 178-residue protein sequence, read N- to C-terminus: Adenine phosphoribosyltransferase (178 aa).

The protein belongs to the purine/pyrimidine phosphoribosyltransferase family. In terms of assembly, homodimer.

The protein localises to the cytoplasm. It catalyses the reaction AMP + diphosphate = 5-phospho-alpha-D-ribose 1-diphosphate + adenine. It functions in the pathway purine metabolism; AMP biosynthesis via salvage pathway; AMP from adenine: step 1/1. Functionally, catalyzes a salvage reaction resulting in the formation of AMP, that is energically less costly than de novo synthesis. This Novosphingobium aromaticivorans (strain ATCC 700278 / DSM 12444 / CCUG 56034 / CIP 105152 / NBRC 16084 / F199) protein is Adenine phosphoribosyltransferase.